Reading from the N-terminus, the 440-residue chain is Xylose isomerase (440 aa).

Catalysis depends on residues H101 and D104. Mg(2+)-binding residues include E232, E268, H271, D296, D307, D309, and D339.

The protein belongs to the xylose isomerase family. Homotetramer. Requires Mg(2+) as cofactor.

It is found in the cytoplasm. It carries out the reaction alpha-D-xylose = alpha-D-xylulofuranose. The sequence is that of Xylose isomerase from Salmonella paratyphi B (strain ATCC BAA-1250 / SPB7).